The sequence spans 303 residues: Ribosomal RNA small subunit methyltransferase A (303 aa).

Positions 1 to 19 are enriched in low complexity; it reads MSSRPPASFSATFSAARSS. Positions 1-34 are disordered; sequence MSSRPPASFSATFSAARSSKCVPPPRRPSTDVSL. Residues His55, Leu57, Gly82, Glu104, Asp130, and Asn149 each contribute to the S-adenosyl-L-methionine site.

It belongs to the class I-like SAM-binding methyltransferase superfamily. rRNA adenine N(6)-methyltransferase family. RsmA subfamily.

The protein localises to the cytoplasm. The catalysed reaction is adenosine(1518)/adenosine(1519) in 16S rRNA + 4 S-adenosyl-L-methionine = N(6)-dimethyladenosine(1518)/N(6)-dimethyladenosine(1519) in 16S rRNA + 4 S-adenosyl-L-homocysteine + 4 H(+). In terms of biological role, specifically dimethylates two adjacent adenosines (A1518 and A1519) in the loop of a conserved hairpin near the 3'-end of 16S rRNA in the 30S particle. May play a critical role in biogenesis of 30S subunits. In Gluconobacter oxydans (strain 621H) (Gluconobacter suboxydans), this protein is Ribosomal RNA small subunit methyltransferase A.